The sequence spans 138 residues: Small ribosomal subunit protein uS11B (138 aa).

The tract at residues 118–138 (DVTPVPSDSTRKKGGRRGRRL) is disordered. The segment covering 129-138 (KKGGRRGRRL) has biased composition (basic residues).

The protein belongs to the universal ribosomal protein uS11 family. As to quaternary structure, component of the small ribosomal subunit (SSU). Mature yeast ribosomes consist of a small (40S) and a large (60S) subunit. The 40S small subunit contains 1 molecule of ribosomal RNA (18S rRNA) and 33 different proteins (encoded by 57 genes). The large 60S subunit contains 3 rRNA molecules (25S, 5.8S and 5S rRNA) and 46 different proteins (encoded by 81 genes). uS11 interacts with eS1 forming part of the mRNA exit tunnel. uS11 interacts with snoRNA U3. uS11 interacts with MPP10. Component of the ribosomal small subunit (SSU) processome composed of at least 40 protein subunits and snoRNA U3.

Its subcellular location is the cytoplasm. The protein localises to the nucleus. It localises to the nucleolus. Its function is as follows. Component of the ribosome, a large ribonucleoprotein complex responsible for the synthesis of proteins in the cell. The small ribosomal subunit (SSU) binds messenger RNAs (mRNAs) and translates the encoded message by selecting cognate aminoacyl-transfer RNA (tRNA) molecules. The large subunit (LSU) contains the ribosomal catalytic site termed the peptidyl transferase center (PTC), which catalyzes the formation of peptide bonds, thereby polymerizing the amino acids delivered by tRNAs into a polypeptide chain. The nascent polypeptides leave the ribosome through a tunnel in the LSU and interact with protein factors that function in enzymatic processing, targeting, and the membrane insertion of nascent chains at the exit of the ribosomal tunnel. uS11 is involved in nucleolar processing of pre-18S ribosomal RNA and ribosome assembly. This Saccharomyces cerevisiae (strain ATCC 204508 / S288c) (Baker's yeast) protein is Small ribosomal subunit protein uS11B.